A 721-amino-acid polypeptide reads, in one-letter code: Cytosolic carboxypeptidase 2 (721 aa).

A disordered region spans residues 43–71 (TASDMINSSSPSESSDSNLEEEQEESKPC). Residues 50 to 59 (SSSPSESSDS) show a composition bias toward low complexity. One can recognise a Peptidase M14 domain in the interval 334–605 (YPYTYSKLQH…CFCDTLLDFC (272 aa)). Zn(2+)-binding residues include His400, Glu403, and His496. Glu569 (proton donor/acceptor) is an active-site residue. The tract at residues 645 to 721 (DIESSTSGSN…TQHGDTEDQS (77 aa)) is disordered. Over residues 647-660 (ESSTSGSNSTESDG) the composition is skewed to low complexity. A compositionally biased stretch (basic residues) spans 672–688 (GKKKLLRSRKERNRLRQ). The segment covering 703–714 (YSCQTLNATTQH) has biased composition (polar residues).

Belongs to the peptidase M14 family. It depends on Zn(2+) as a cofactor.

It localises to the cytoplasm. Its subcellular location is the cytosol. The protein resides in the cytoskeleton. The protein localises to the microtubule organizing center. It is found in the centrosome. It localises to the centriole. Its subcellular location is the cilium basal body. It catalyses the reaction (L-glutamyl)(n+1)-gamma-L-glutamyl-L-glutamyl-[protein] + H2O = (L-glutamyl)(n)-gamma-L-glutamyl-L-glutamyl-[protein] + L-glutamate. Functionally, metallocarboxypeptidase that mediates deglutamylation of target proteins. Catalyzes the deglutamylation of polyglutamate side chains generated by post-translational polyglutamylation in proteins such as tubulins. Also removes gene-encoded polyglutamates from the carboxy-terminus of target proteins such as MYLK. Does not show detyrosinase or deglycylase activities from the carboxy-terminus of tubulin. Metallocarboxypeptidase that mediates deglutamylation of tubulin and non-tubulin target proteins. Catalyzes the removal of polyglutamate side chains present on the gamma-carboxyl group of glutamate residues within the C-terminal tail of tubulin protein. Specifically cleaves tubulin long-side-chains, while it is not able to remove the branching point glutamate. Also catalyzes the removal of polyglutamate residues from the carboxy-terminus of non-tubulin proteins. The sequence is that of Cytosolic carboxypeptidase 2 (zte25) from Danio rerio (Zebrafish).